We begin with the raw amino-acid sequence, 495 residues long: MQWSPTPGASACLGWASSLACSTAPTLLGRAGRGPLMAAKWFKEFPLNLKTVSERAKPGGGGGKLRKNSEAGGAGPGPGKGRKNSAAELGSGRAGVGPKDSRLSRDSLQGLIQAAAGKGRKNSRATEEEPHRGATKSSGCSTYINRLIKVDTQEKNGKSNYPSSSSSSSSSSSSASSSPSSLGPELDKGKIIKQQETVIILEDYADPYDAKRTKGQRDAERVGENDGYMEPYDAQQMITEIRRRGSKDPLVKALQLLDSPCEPADGGLKSETLAKRRSSKDLLGKPPQLYDTPYEPAEGGPRAEGKARPPDSRLPENDERPAAEYEQPWEWKKEQIVRALSVQFEGAERPSFREETVRQHHRQKSWTQKILKPALSDHSEGEKVDPGLPLEKQPWYHGAISRAEAESRLQPCKEAGYLVRNSESGNSRYSIALKTSQGCVHIIVAQTKDNKYTLNQTSAVFDSIPEVVHYYSNEKLPFKGAEHMTLLYPVHSKLH.

Disordered regions lie at residues 51–190 (TVSE…DKGK), 203–233 (DYADPYDAKRTKGQRDAERVGENDGYMEPYD), and 256–327 (LLDS…EYEQ). Ser-107 is modified (phosphoserine). The segment covering 135–144 (TKSSGCSTYI) has biased composition (polar residues). Basic and acidic residues predominate over residues 148–157 (IKVDTQEKNG). Residues 162-181 (PSSSSSSSSSSSSASSSPSS) are compositionally biased toward low complexity. Composition is skewed to basic and acidic residues over residues 208-224 (YDAKRTKGQRDAERVGE) and 301-327 (PRAEGKARPPDSRLPENDERPAAEYEQ). The 96-residue stretch at 395–490 (WYHGAISRAE…AEHMTLLYPV (96 aa)) folds into the SH2 domain.

This Homo sapiens (Human) protein is SH2 domain-containing adapter protein E (SHE).